A 570-amino-acid chain; its full sequence is Peptidyl-prolyl cis-trans isomerase-like 2 (570 aa).

The region spanning 37 to 110 (KRLPFNFCSL…GDYVDPVTYK (74 aa)) is the U-box domain. 3 disordered regions span residues 215–253 (RSER…KPTP), 428–449 (STTL…PTPD), and 469–570 (KKAE…SSWD). Positions 234–248 (STTTSTQSKTASFQS) are enriched in low complexity. One can recognise a PPIase cyclophilin-type domain in the interval 298–457 (QKGYARISTT…PDIRITDVTI (160 aa)). The span at 428-446 (STTLNNLETHPVNSSTNRP) shows a compositional bias: polar residues. Positions 469 to 483 (KKAEEASGKNKKVDP) are enriched in basic and acidic residues. Composition is skewed to acidic residues over residues 484-497 (TEED…DDDQ) and 535-550 (QEED…EPEP).

It belongs to the cyclophilin-type PPIase family. PPIL2 subfamily.

The protein localises to the nucleus. It carries out the reaction [protein]-peptidylproline (omega=180) = [protein]-peptidylproline (omega=0). The enzyme catalyses S-ubiquitinyl-[E2 ubiquitin-conjugating enzyme]-L-cysteine + [acceptor protein]-L-lysine = [E2 ubiquitin-conjugating enzyme]-L-cysteine + N(6)-ubiquitinyl-[acceptor protein]-L-lysine.. In terms of biological role, may catalyze the cis-trans isomerization of proline imidic peptide bonds in oligopeptides thereby assisting the folding of proteins. May also function as a chaperone, playing a role in intracellular transport of proteins. May also have a protein ubiquitin ligase activity acting as an E3 ubiquitin protein ligase or as a ubiquitin-ubiquitin ligase promoting elongation of ubiquitin chains on proteins. The protein is Peptidyl-prolyl cis-trans isomerase-like 2 (cyp8) of Aspergillus oryzae (strain ATCC 42149 / RIB 40) (Yellow koji mold).